Reading from the N-terminus, the 214-residue chain is Probable transaldolase (214 aa).

Residue K83 is the Schiff-base intermediate with substrate of the active site.

This sequence belongs to the transaldolase family. Type 3B subfamily.

Its subcellular location is the cytoplasm. It carries out the reaction D-sedoheptulose 7-phosphate + D-glyceraldehyde 3-phosphate = D-erythrose 4-phosphate + beta-D-fructose 6-phosphate. It functions in the pathway carbohydrate degradation; pentose phosphate pathway; D-glyceraldehyde 3-phosphate and beta-D-fructose 6-phosphate from D-ribose 5-phosphate and D-xylulose 5-phosphate (non-oxidative stage): step 2/3. Functionally, transaldolase is important for the balance of metabolites in the pentose-phosphate pathway. The polypeptide is Probable transaldolase (Alkaliphilus metalliredigens (strain QYMF)).